The chain runs to 553 residues: Solute carrier family 22 member 12 (553 aa).

A helical membrane pass occupies residues 16–36; the sequence is FQLLQAVALVTPILWVTTQNM. N-linked (GlcNAc...) asparagine glycosylation is found at Asn-56, Asn-102, and Asn-107. Helical transmembrane passes span 146-166, 182-202, 204-224, 232-252, 260-280, 351-371, 378-398, 407-427, 435-455, 466-486, and 495-515; these read PMAQ…CGHA, LVSV…YCLF, FLVA…LMEW, LMMT…GSVA, MLQL…WWLP, FISM…ALDL, IFLL…GSLL, LCQA…ILVP, SSLA…VTIF, MTAV…GPLV, and WLPL…ALLL. Ser-534 carries the post-translational modification Phosphoserine.

This sequence belongs to the major facilitator (TC 2.A.1) superfamily. Organic cation transporter (TC 2.A.1.19) family. Interacts with PDZK1. In terms of processing, N-glycosylated. Expressed in the proximal tubular epithelial cells in kidney.

Its subcellular location is the apical cell membrane. The enzyme catalyses urate(out) + (S)-lactate(in) = urate(in) + (S)-lactate(out). It catalyses the reaction nicotinate(in) + urate(out) = nicotinate(out) + urate(in). It carries out the reaction urate(out) + n chloride(in) = urate(in) + n chloride(out). The catalysed reaction is orotate(out) + nicotinate(in) = orotate(in) + nicotinate(out). Functionally, electroneutral antiporter that translocates urate across the apical membrane of proximal tubular cells in exchange for monovalent organic or inorganic anions. Involved in renal reabsorption of urate and helps maintaining blood levels of uric acid. Mediates urate uptake by an exchange with organic anions such as (S)-lactate and nicotinate, and inorganic anion Cl(-). Other inorganic anions such as Br(-), I(-) and NO3(-) may also act as counteranions that exchange for urate. Also mediates orotate tubular uptake coupled with nicotinate efflux and to a lesser extent with lactate efflux, therefore displaying a potential role in orotate renal reabsorption. Orotate transport is Cl(-)-dependent. This chain is Solute carrier family 22 member 12 (Slc22a12), found in Rattus norvegicus (Rat).